We begin with the raw amino-acid sequence, 267 residues long: Carboxy-S-adenosyl-L-methionine synthase (267 aa).

Residues 1–11 (MPNRDTQSQND) show a composition bias toward polar residues. The segment at 1-25 (MPNRDTQSQNDTPRHSPEAAEPQRD) is disordered. The segment covering 12-24 (TPRHSPEAAEPQR) has biased composition (basic and acidic residues). S-adenosyl-L-methionine contacts are provided by residues Y59, 84 to 86 (GCS), 109 to 110 (DN), 137 to 138 (DI), N152, and R219.

Belongs to the class I-like SAM-binding methyltransferase superfamily. Cx-SAM synthase family. In terms of assembly, homodimer.

The enzyme catalyses prephenate + S-adenosyl-L-methionine = carboxy-S-adenosyl-L-methionine + 3-phenylpyruvate + H2O. In terms of biological role, catalyzes the conversion of S-adenosyl-L-methionine (SAM) to carboxy-S-adenosyl-L-methionine (Cx-SAM). The polypeptide is Carboxy-S-adenosyl-L-methionine synthase (Yersinia pseudotuberculosis serotype O:1b (strain IP 31758)).